Here is a 675-residue protein sequence, read N- to C-terminus: Parasporal crystal protein Cry18Ba (675 aa).

It belongs to the delta endotoxin family.

Functionally, binds to the brush border membrane vesicles of scarab larvae and damages the gut wall somehow to allow the vegetative cells of P.popilliae to enter the hemolymph. The chain is Parasporal crystal protein Cry18Ba (cry18Ba) from Paenibacillus popilliae (Bacillus popilliae).